A 252-amino-acid chain; its full sequence is Carboxy-S-adenosyl-L-methionine synthase (252 aa).

Residues tyrosine 45, 70 to 72 (GCS), 95 to 96 (DN), 123 to 124 (DI), asparagine 138, and arginine 205 contribute to the S-adenosyl-L-methionine site.

The protein belongs to the class I-like SAM-binding methyltransferase superfamily. Cx-SAM synthase family. As to quaternary structure, homodimer.

The catalysed reaction is prephenate + S-adenosyl-L-methionine = carboxy-S-adenosyl-L-methionine + 3-phenylpyruvate + H2O. In terms of biological role, catalyzes the conversion of S-adenosyl-L-methionine (SAM) to carboxy-S-adenosyl-L-methionine (Cx-SAM). This Photorhabdus laumondii subsp. laumondii (strain DSM 15139 / CIP 105565 / TT01) (Photorhabdus luminescens subsp. laumondii) protein is Carboxy-S-adenosyl-L-methionine synthase.